Consider the following 393-residue polypeptide: Tryptophan 2,3-dioxygenase (393 aa).

Residues 56-60 (FIVTH) and R127 each bind substrate. H312 provides a ligand contact to heme. Residue T327 coordinates substrate.

It belongs to the tryptophan 2,3-dioxygenase family. In terms of assembly, homotetramer. Dimer of dimers. It depends on heme as a cofactor.

The catalysed reaction is L-tryptophan + O2 = N-formyl-L-kynurenine. The protein operates within amino-acid degradation; L-tryptophan degradation via kynurenine pathway; L-kynurenine from L-tryptophan: step 1/2. It functions in the pathway pigment biosynthesis; ommochrome biosynthesis. Stimulated by low concentrations of hydrogen peroxide (5 uM), ascorbate (0.1-0.3 mM), and sodium hydrosulfite (0.1 mM). Inhibited by high concentrations of hydrogen peroxide (0.1 mM), ascorbate (10 mM), and sodium hydrosulfite (1 mM). Its function is as follows. Heme-dependent dioxygenase that catalyzes the oxidative cleavage of the L-tryptophan (L-Trp) pyrrole ring and converts L-tryptophan to N-formyl-L-kynurenine. Catalyzes the oxidative cleavage of the indole moiety. The protein is Tryptophan 2,3-dioxygenase of Aedes aegypti (Yellowfever mosquito).